A 38-amino-acid chain; its full sequence is Mu-hexatoxin-Mg1b (38 aa).

3 disulfides stabilise this stretch: Cys1–Cys15, Cys8–Cys20, and Cys14–Cys34. Ser38 carries the post-translational modification Serine amide.

This sequence belongs to the neurotoxin 14 (magi-1) family. 09 (magi-1) subfamily. As to expression, expressed by the venom gland.

It is found in the secreted. Insecticidal neurotoxin. Shows competition for site 3 of insect voltage-gated sodium channels (Nav). The polypeptide is Mu-hexatoxin-Mg1b (Macrothele gigas (Japanese funnel web spider)).